Reading from the N-terminus, the 626-residue chain is MVATVSSTSLLEQPELLERRLQEIPQEPGVYFMGDRQGEILYIGKAKKLRTRVRSYFRDSQPHTARIALMVQQVAEIEFIVTDTEAEALALEANLIKQHQPHFNVLLKDDKKYPYVCITWSETYPRIFITRKRRLNQAKDRYYGPYVDSFSLRQTLRLIQRIFPLRQRRQPLFKHRPCLNYDIGRCPGVCQELITPEDYRQTLQKVAMVFQGRTQELHQLLTQQMEKAAADLKFEQAALIRDQINSLGKLNADQKVSLPQDTISRDAIAVASDGQISAIQLFQIRAGRLVGRLGFFADGVESELEKGEVLQRVLEQHYQQVEAVEIPSEVILPCALPDGELLNDWLTSQRGRKVTFNLPQRQTKAELLEMVERNAQYELERLQKQTAKNVTALEDLAEILNLETLPKRIEGYDISHIQGSNAVASQVVFIDGVPAQQYYRHYKIKNPSIKVGHSDDFASLAEVIIRRFQSSVKGKKNQQDWPDLIMIDGGKGQLSAVVKVLKKMDLLDKFTVVSLAKQREEIFLPGESQPLPTHAEQPGVQLLRRLRDEAHRFAVSFHRQQRLSKSRRSRLDEIPGLGFSRQKQLLAHFRSLDYIREASVKQLQEVPGIGPQLAQTIYDYFHPVNS.

In terms of domain architecture, GIY-YIG spans 26-105 (QEPGVYFMGD…IKQHQPHFNV (80 aa)). The 36-residue stretch at 215-250 (QELHQLLTQQMEKAAADLKFEQAALIRDQINSLGKL) folds into the UVR domain.

The protein belongs to the UvrC family. Interacts with UvrB in an incision complex.

It localises to the cytoplasm. Its function is as follows. The UvrABC repair system catalyzes the recognition and processing of DNA lesions. UvrC both incises the 5' and 3' sides of the lesion. The N-terminal half is responsible for the 3' incision and the C-terminal half is responsible for the 5' incision. In Synechocystis sp. (strain ATCC 27184 / PCC 6803 / Kazusa), this protein is UvrABC system protein C.